We begin with the raw amino-acid sequence, 495 residues long: Major facilitator-type transporter hxnP (495 aa).

A disordered region spans residues 1-24 (MGATATDIEKVPSAGTPDEPKAGE). Helical transmembrane passes span 36 to 55 (SFVR…MYFF), 84 to 104 (LLIL…NLLI), 123 to 143 (VWGI…LLAI), 145 to 165 (IILG…FTLF), and 177 to 197 (VLQS…FGLF). Asn200 carries N-linked (GlcNAc...) asparagine glycosylation. Transmembrane regions (helical) follow at residues 209 to 229 (WLFI…FWWL), 282 to 302 (VITF…PIIV), 314 to 334 (LWTV…AKSS), 341 to 361 (SLHI…LASI), and 368 to 388 (GVSY…TCLV). A glycan (N-linked (GlcNAc...) asparagine) is linked at Asn395. The next 2 helical transmembrane spans lie at 404–424 (ANTG…AATF) and 436–456 (LVAT…MGTW).

The protein belongs to the major facilitator superfamily.

Its subcellular location is the cell membrane. Its function is as follows. Major facilitator-type transporter, part of the hnx cluster involved in the purine degradation. The nicotinate hydroxylase hnxS accepts nicotinate as a substrate and catalyzes the first step of nicotinate catabolism. The major facilitator-type transporters hxnP and hxnZ are probably involved in the uptake of nicotinate-derived metabolites, and the oxidoreductases hxnT and hxnY in the further metabolism of 6-OH nicotinic acid. This Emericella nidulans (strain FGSC A4 / ATCC 38163 / CBS 112.46 / NRRL 194 / M139) (Aspergillus nidulans) protein is Major facilitator-type transporter hxnP.